A 73-amino-acid polypeptide reads, in one-letter code: Large ribosomal subunit protein bL31 (73 aa).

Belongs to the bacterial ribosomal protein bL31 family. Type A subfamily. In terms of assembly, part of the 50S ribosomal subunit.

Binds the 23S rRNA. The polypeptide is Large ribosomal subunit protein bL31 (Bartonella henselae (strain ATCC 49882 / DSM 28221 / CCUG 30454 / Houston 1) (Rochalimaea henselae)).